A 130-amino-acid polypeptide reads, in one-letter code: Sirohydrochlorin cobaltochelatase (130 aa).

His-12 (proton acceptor) is an active-site residue. His-12 serves as a coordination point for Co(2+). Residue His-12 coordinates Ni(2+). Substrate contacts are provided by residues Glu-48 and 73 to 78; that span reads LASGVH. His-78 serves as a coordination point for Co(2+). Position 78 (His-78) interacts with Ni(2+).

This sequence belongs to the CbiX family. CbiXS subfamily. As to quaternary structure, homotetramer; dimer of dimers.

The catalysed reaction is Co-sirohydrochlorin + 2 H(+) = sirohydrochlorin + Co(2+). It carries out the reaction Ni-sirohydrochlorin + 2 H(+) = sirohydrochlorin + Ni(2+). It functions in the pathway cofactor biosynthesis; adenosylcobalamin biosynthesis; cob(II)yrinate a,c-diamide from sirohydrochlorin (anaerobic route): step 1/10. Functionally, catalyzes the insertion of Co(2+) into sirohydrochlorin as part of the anaerobic pathway to cobalamin biosynthesis. Involved in the biosynthesis of the unique nickel-containing tetrapyrrole coenzyme F430, the prosthetic group of methyl-coenzyme M reductase (MCR), which plays a key role in methanogenesis and anaerobic methane oxidation. Catalyzes the insertion of Ni(2+) into sirohydrochlorin to yield Ni-sirohydrochlorin. In Methanosarcina barkeri (strain Fusaro / DSM 804), this protein is Sirohydrochlorin cobaltochelatase.